We begin with the raw amino-acid sequence, 89 residues long: Small ribosomal subunit protein uS14A (89 aa).

The protein belongs to the universal ribosomal protein uS14 family. As to quaternary structure, part of the 30S ribosomal subunit. Contacts proteins S3 and S10.

Binds 16S rRNA, required for the assembly of 30S particles and may also be responsible for determining the conformation of the 16S rRNA at the A site. This Bacillus licheniformis (strain ATCC 14580 / DSM 13 / JCM 2505 / CCUG 7422 / NBRC 12200 / NCIMB 9375 / NCTC 10341 / NRRL NRS-1264 / Gibson 46) protein is Small ribosomal subunit protein uS14A.